We begin with the raw amino-acid sequence, 70 residues long: Flexible pilin (70 aa).

An N-terminal signal peptide occupies residues 1–24 (MPNFFRNGCIALVGSVAAMGAAHA).

In terms of assembly, homomer.

Its subcellular location is the fimbrium. In terms of biological role, fimbriae (also called pili) are polar filaments radiating from the surface of the bacterium to a length of 0.5-1.5 micrometers and numbering 100-300 per cell. They enable bacteria to colonize the epithelium of specific host organs. Flexible pili possess hemagglutinating function. The protein is Flexible pilin (aerA) of Aeromonas hydrophila.